A 314-amino-acid polypeptide reads, in one-letter code: BTB/POZ domain-containing protein KCTD17 (314 aa).

The region spanning 24–94 (KWVRLNVGGT…LRHGKLVLDK (71 aa)) is the BTB domain. The disordered stretch occupies residues 190–268 (STPNGLSSES…PAGGSRPHPL (79 aa)). Positions 196–239 (SSESSRKTKSTEEQLEEQQQQEEEVEEVEVEQVQVEADAQEKAQ) form a coiled coil. The span at 208–225 (EQLEEQQQQEEEVEEVEV) shows a compositional bias: acidic residues.

Homopentamer; forms a closed pentamer. Interacts with CUL3; interaction is direct and forms a 5:5 heterodecamer. Interacts with TCHP. Interacts with CUL3, as part of the BCR(KCTD17) E3 ubiquitin ligase complex, at least composed of CUL3, KCTD17 and RBX1. In terms of tissue distribution, highly expressed in brain. Highest expression is observed in the putamen and the thalamus.

The protein localises to the cytoplasm. Functionally, substrate-adapter for CUL3-RING ubiquitin ligase complexes which mediates the ubiquitination and subsequent proteasomal degradation of TCHP, a protein involved in ciliogenesis down-regulation. Thereby, positively regulates ciliogenesis, playing a crucial role in the initial steps of axoneme extension. May also play a role in endoplasmic reticulum calcium ion homeostasis. This is BTB/POZ domain-containing protein KCTD17 from Homo sapiens (Human).